The chain runs to 324 residues: Beta-ketoacyl-[acyl-carrier-protein] synthase III (324 aa).

Catalysis depends on residues cysteine 112 and histidine 249. The segment at 250-254 (QANRR) is ACP-binding. Asparagine 279 is a catalytic residue.

This sequence belongs to the thiolase-like superfamily. FabH family. In terms of assembly, homodimer.

It localises to the cytoplasm. It carries out the reaction malonyl-[ACP] + acetyl-CoA + H(+) = 3-oxobutanoyl-[ACP] + CO2 + CoA. The protein operates within lipid metabolism; fatty acid biosynthesis. In terms of biological role, catalyzes the condensation reaction of fatty acid synthesis by the addition to an acyl acceptor of two carbons from malonyl-ACP. Catalyzes the first condensation reaction which initiates fatty acid synthesis and may therefore play a role in governing the total rate of fatty acid production. Possesses both acetoacetyl-ACP synthase and acetyl transacylase activities. Its substrate specificity determines the biosynthesis of branched-chain and/or straight-chain of fatty acids. The chain is Beta-ketoacyl-[acyl-carrier-protein] synthase III from Streptococcus pyogenes serotype M4 (strain MGAS10750).